A 239-amino-acid polypeptide reads, in one-letter code: Superoxide dismutase 1 copper chaperone (239 aa).

In terms of domain architecture, HMA spans 7–70; the sequence is FYEATYAVPM…ALRDCGRDAI (64 aa). Cu cation contacts are provided by Cys-18 and Cys-21. Cysteines 28 and 65 form a disulfide. Asp-163 is a Zn(2+) binding site. The Cu cation site is built by Cys-219 and Cys-221.

The protein belongs to the CCS1 family. Cu(2+) serves as cofactor.

It localises to the cytoplasm. Its function is as follows. Copper chaperone for superoxide dismutase 1 (SOD1). Binds copper ions and delivers them specifically to SOD1. The sequence is that of Superoxide dismutase 1 copper chaperone (CCS1) from Candida glabrata (strain ATCC 2001 / BCRC 20586 / JCM 3761 / NBRC 0622 / NRRL Y-65 / CBS 138) (Yeast).